The primary structure comprises 4965 residues: Auxin transport protein BIG (4965 aa).

3 helical membrane passes run 289 to 309 (SDIC…IFSP), 646 to 666 (ACLA…AYEV), and 772 to 792 (LFLI…YEGL). The interval 1383–1425 (TNQESNSTVDCDASSGEEDEDDGTSDGELVSIDRDEEEDGNSE) is disordered. Over residues 1397–1407 (SGEEDEDDGTS) the composition is skewed to acidic residues. The UBR-type zinc-finger motif lies at 1431-1502 (KVCTFTSSGS…RGSSCQCLKP (72 aa)). The disordered stretch occupies residues 2437–2456 (DDAPDNHAKASAASNSTTGN). Positions 2445-2456 (KASAASNSTTGN) are enriched in low complexity. The segment at 2469–2528 (SVQYCCDGCSTVPILRRRWHCNICPDFDLCETCYEILDADRLPAPHSRDHPMSAIPIELD) adopts a ZZ-type zinc-finger fold. Zn(2+) is bound by residues Cys2474, Cys2477, Cys2489, Cys2492, Cys2498, Cys2501, His2514, and His2518. The tract at residues 2997–3037 (NAQKTESGDIGSSTRTGSQSSDSKKKRKGDDSSEGSSEKSC) is disordered. Residues 3007-3017 (GSSTRTGSQSS) are compositionally biased toward low complexity. The span at 3024–3037 (KGDDSSEGSSEKSC) shows a compositional bias: basic and acidic residues. The MYND-type; degenerate zinc finger occupies 3319-3359 (CPRCSRSVTDKHGICSNCHENAYQCRQCRNINYENLDSFLC). A disordered region spans residues 3672–3721 (PKSDSGEKEPGMGKSSLMQAKNDDTVGHSVTNLSTSKTQSELSGKIPDGS). Over residues 3699–3713 (HSVTNLSTSKTQSEL) the composition is skewed to polar residues. The tract at residues 4433 to 4963 (PSIPLILSML…DFVRAIIHGA (531 aa)) is UBR4 E3 catalytic module. A HemiRING-type zinc finger spans residues 4562-4681 (GLACMVCREG…WDQLNSLGRA (120 aa)). Zn(2+) is bound by residues Cys4565, Cys4568, His4615, and Cys4618. The 280-residue stretch at 4684-4963 (SRLRLLTYDI…DFVRAIIHGA (280 aa)) folds into the UZI domain. Positions 4753–4770 (SSSPSTPESPVRLSALSG) are enriched in low complexity. Disordered regions lie at residues 4753–4778 (SSSP…SGSS) and 4822–4846 (STLK…ADSN). The segment covering 4824 to 4845 (LKLSADTSSSAVRSDEGSSADS) has biased composition (polar residues).

It belongs to the UBR4 family.

The protein resides in the membrane. Required for auxin efflux and polar auxin transport (PAT) influencing auxin-mediated developmental responses (e.g. cell elongation, apical dominance, lateral root production, inflorescence architecture, general growth and development). The protein is Auxin transport protein BIG of Oryza sativa subsp. japonica (Rice).